The sequence spans 404 residues: Probable tRNA sulfurtransferase (404 aa).

The THUMP domain occupies 60 to 165 (QPVAESLKQI…EEAAYISYET (106 aa)). ATP is bound by residues 183–184 (ML), 208–209 (HF), Arg-265, Gly-287, and Gln-296.

It belongs to the ThiI family.

The protein localises to the cytoplasm. The catalysed reaction is [ThiI sulfur-carrier protein]-S-sulfanyl-L-cysteine + a uridine in tRNA + 2 reduced [2Fe-2S]-[ferredoxin] + ATP + H(+) = [ThiI sulfur-carrier protein]-L-cysteine + a 4-thiouridine in tRNA + 2 oxidized [2Fe-2S]-[ferredoxin] + AMP + diphosphate. It carries out the reaction [ThiS sulfur-carrier protein]-C-terminal Gly-Gly-AMP + S-sulfanyl-L-cysteinyl-[cysteine desulfurase] + AH2 = [ThiS sulfur-carrier protein]-C-terminal-Gly-aminoethanethioate + L-cysteinyl-[cysteine desulfurase] + A + AMP + 2 H(+). It functions in the pathway cofactor biosynthesis; thiamine diphosphate biosynthesis. In terms of biological role, catalyzes the ATP-dependent transfer of a sulfur to tRNA to produce 4-thiouridine in position 8 of tRNAs, which functions as a near-UV photosensor. Also catalyzes the transfer of sulfur to the sulfur carrier protein ThiS, forming ThiS-thiocarboxylate. This is a step in the synthesis of thiazole, in the thiamine biosynthesis pathway. The sulfur is donated as persulfide by IscS. This is Probable tRNA sulfurtransferase from Streptococcus sanguinis (strain SK36).